Reading from the N-terminus, the 207-residue chain is Guanylate kinase (207 aa).

The 180-residue stretch at 6-185 folds into the Guanylate kinase-like domain; it reads GLLIVLSGPS…AKNRIQCIVE (180 aa). 13–20 is an ATP binding site; that stretch reads GPSGVGKG.

This sequence belongs to the guanylate kinase family.

It is found in the cytoplasm. It catalyses the reaction GMP + ATP = GDP + ADP. Functionally, essential for recycling GMP and indirectly, cGMP. The chain is Guanylate kinase from Staphylococcus aureus (strain USA300).